The sequence spans 254 residues: MENEREKQVYLAKLSEQTERYDEMVEAMKKVAQLDVELTVEERNLVSVGYKNVIGARRASWRILSSIEQKEESKGNDENVKRLKNYRKRVEDELAKVCNDILSVIDKHLIPSSNAVESTVFFYKMKGDYYRYLAEFSSGAERKEAADQSLEAYKAAVAAAENGLAPTHPVRLGLALNFSVFYYEILNSPESACQLAKQAFDDAIAELDSLNEESYKDSTLIMQLLRDNLTLWTSDLNEEGDERTKGADEPQDEN.

Residues S65 and S188 each carry the phosphoserine modification.

This sequence belongs to the 14-3-3 family. Interacts with DREB1A and DREB1B in the nucleus. Interacts with CINV1.

It localises to the nucleus. Its subcellular location is the cytoplasm. Its function is as follows. Is associated with a DNA binding complex that binds to the G box, a well-characterized cis-acting DNA regulatory element found in plant genes. The protein is 14-3-3-like protein GF14 epsilon (GRF10) of Arabidopsis thaliana (Mouse-ear cress).